The chain runs to 1342 residues: DNA-directed RNA polymerase subunit beta (1342 aa).

The protein belongs to the RNA polymerase beta chain family. As to quaternary structure, the RNAP catalytic core consists of 2 alpha, 1 beta, 1 beta' and 1 omega subunit. When a sigma factor is associated with the core the holoenzyme is formed, which can initiate transcription.

The catalysed reaction is RNA(n) + a ribonucleoside 5'-triphosphate = RNA(n+1) + diphosphate. Its function is as follows. DNA-dependent RNA polymerase catalyzes the transcription of DNA into RNA using the four ribonucleoside triphosphates as substrates. This Yersinia enterocolitica serotype O:8 / biotype 1B (strain NCTC 13174 / 8081) protein is DNA-directed RNA polymerase subunit beta.